The following is a 1032-amino-acid chain: Exportin-T (1032 aa).

It belongs to the exportin family.

The protein localises to the nucleus. It is found in the cytoplasm. In terms of biological role, tRNA nucleus export receptor which facilitates tRNA translocation across the nuclear pore complex. Involved in pre-tRNA splicing, probably by affecting the interaction of pre-tRNA with splicing endonuclease. This chain is Exportin-T (los1), found in Aspergillus fumigatus (strain CBS 144.89 / FGSC A1163 / CEA10) (Neosartorya fumigata).